The sequence spans 509 residues: ATP synthase subunit alpha (509 aa).

An ATP-binding site is contributed by 169-176 (GDRQTGKT).

Belongs to the ATPase alpha/beta chains family. In terms of assembly, F-type ATPases have 2 components, CF(1) - the catalytic core - and CF(0) - the membrane proton channel. CF(1) has five subunits: alpha(3), beta(3), gamma(1), delta(1), epsilon(1). CF(0) has three main subunits: a(1), b(2) and c(9-12). The alpha and beta chains form an alternating ring which encloses part of the gamma chain. CF(1) is attached to CF(0) by a central stalk formed by the gamma and epsilon chains, while a peripheral stalk is formed by the delta and b chains.

It is found in the cell inner membrane. It catalyses the reaction ATP + H2O + 4 H(+)(in) = ADP + phosphate + 5 H(+)(out). Functionally, produces ATP from ADP in the presence of a proton gradient across the membrane. The alpha chain is a regulatory subunit. The polypeptide is ATP synthase subunit alpha (Mesorhizobium japonicum (strain LMG 29417 / CECT 9101 / MAFF 303099) (Mesorhizobium loti (strain MAFF 303099))).